The sequence spans 280 residues: Small ribosomal subunit protein uS3 (280 aa).

In terms of domain architecture, KH type-2 spans 38 to 106 (IRRLLSTGLE…QVQLNILEVR (69 aa)). Positions 215 to 280 (AAAAPAGAER…PAAEPQSTES (66 aa)) are disordered. Over residues 238–280 (SGASGTTATGTEAGRAAASADESTAAGQPAEAAPAAEPQSTES) the composition is skewed to low complexity.

Belongs to the universal ribosomal protein uS3 family. As to quaternary structure, part of the 30S ribosomal subunit. Forms a tight complex with proteins S10 and S14.

In terms of biological role, binds the lower part of the 30S subunit head. Binds mRNA in the 70S ribosome, positioning it for translation. This chain is Small ribosomal subunit protein uS3, found in Mycobacterium avium (strain 104).